Consider the following 1031-residue polypeptide: Protein translocase subunit SecA (1031 aa).

ATP contacts are provided by residues Gln143, 161-165 (GEGKT), and Asp661. The span at 963–973 (KERLVAKHEES) shows a compositional bias: basic and acidic residues. The segment at 963–1031 (KERLVAKHEE…GKKYKNCCGR (69 aa)) is disordered. Residues Cys1017, Cys1019, Cys1028, and Cys1029 each contribute to the Zn(2+) site.

Belongs to the SecA family. In terms of assembly, monomer and homodimer. Part of the essential Sec protein translocation apparatus which comprises SecA, SecYEG and auxiliary proteins SecDF. Other proteins may also be involved. Zn(2+) serves as cofactor.

It localises to the cell inner membrane. The protein resides in the cytoplasm. The enzyme catalyses ATP + H2O + cellular proteinSide 1 = ADP + phosphate + cellular proteinSide 2.. In terms of biological role, part of the Sec protein translocase complex. Interacts with the SecYEG preprotein conducting channel. Has a central role in coupling the hydrolysis of ATP to the transfer of proteins into and across the cell membrane, serving as an ATP-driven molecular motor driving the stepwise translocation of polypeptide chains across the membrane. The protein is Protein translocase subunit SecA of Prosthecochloris aestuarii (strain DSM 271 / SK 413).